The following is a 462-amino-acid chain: MFWQFYKRGKEQGFWQPHQTIVVAVSGGVDSMALLTLMEQVAEKEQLQLVVAHVNHQLREASAQEAQYLATYCQQRELTYYETRWEDPEKQRNLEAKARTFRYEFFKEVMEIEGAAVLMTAHHLDDQAETILMKLIRGTNFSHSAGIKERRPFATGELIRPLLIYPKEELYQFAQRQAFVYFEDETNQTNEYLRNRLRNQVLPLLKQENPQFLDQIASFSNEQRFAQEFIQEQIEPQLSEAVEPTKQGWRIPLKRLLKETPAYQHFFLTAFFQKTLVPLGVSLNQRQMTQILKVLNDERQPQGSVMLEQQWQLAKSYDWLCLEQKQAALREEVTHLLVPGAGIYLSETEWLGLIATDKPFPLPEEINQWTGQLLAIPLTTATPLTVRHRQSGDRITLKPGFTKKLSRVFIDQKVPNEARESAWVITDEQEEIIWVPKFANSYLSIPLETDKIHYRLLFKTKE.

26 to 31 contributes to the ATP binding site; the sequence is SGGVDS.

This sequence belongs to the tRNA(Ile)-lysidine synthase family.

It localises to the cytoplasm. The enzyme catalyses cytidine(34) in tRNA(Ile2) + L-lysine + ATP = lysidine(34) in tRNA(Ile2) + AMP + diphosphate + H(+). Ligates lysine onto the cytidine present at position 34 of the AUA codon-specific tRNA(Ile) that contains the anticodon CAU, in an ATP-dependent manner. Cytidine is converted to lysidine, thus changing the amino acid specificity of the tRNA from methionine to isoleucine. This is tRNA(Ile)-lysidine synthase from Enterococcus faecalis (strain ATCC 700802 / V583).